The following is a 224-amino-acid chain: 7-cyano-7-deazaguanine synthase (224 aa).

9–19 is a binding site for ATP; that stretch reads LSGGLDSATAL. Zn(2+) is bound by residues Cys-188, Cys-198, Cys-201, and Cys-204.

This sequence belongs to the QueC family. Zn(2+) is required as a cofactor.

It catalyses the reaction 7-carboxy-7-deazaguanine + NH4(+) + ATP = 7-cyano-7-deazaguanine + ADP + phosphate + H2O + H(+). It functions in the pathway purine metabolism; 7-cyano-7-deazaguanine biosynthesis. In terms of biological role, catalyzes the ATP-dependent conversion of 7-carboxy-7-deazaguanine (CDG) to 7-cyano-7-deazaguanine (preQ(0)). The chain is 7-cyano-7-deazaguanine synthase from Thiobacillus denitrificans (strain ATCC 25259 / T1).